The following is a 1382-amino-acid chain: Hepatocyte growth factor receptor (1382 aa).

The N-terminal stretch at Met-1–Glu-24 is a signal peptide. Topologically, residues Glu-25–Thr-933 are extracellular. Residues Arg-27 to Leu-516 enclose the Sema domain. Asn-38, Asn-49, and Asn-99 each carry an N-linked (GlcNAc...) asparagine glycan. 4 cysteine pairs are disulfide-bonded: Cys-94–Cys-100, Cys-97–Cys-160, Cys-133–Cys-141, and Cys-173–Cys-176. Asn-203 and Asn-359 each carry an N-linked (GlcNAc...) asparagine glycan. Disulfide bonds link Cys-299–Cys-364 and Cys-386–Cys-398. N-linked (GlcNAc...) asparagine glycans are attached at residues Asn-400, Asn-406, Asn-450, and Asn-495. 4 disulfide bridges follow: Cys-521–Cys-539, Cys-527–Cys-562, Cys-530–Cys-546, and Cys-542–Cys-552. 3 IPT/TIG domains span residues Pro-564 to Val-656, Pro-658 to Lys-740, and Pro-743 to Val-837. O-linked (Man) threonine glycosylation is present at Thr-583. Residues Asn-608, Asn-616, and Asn-636 are each glycosylated (N-linked (GlcNAc...) asparagine). Residues Thr-677 and Thr-762 are each glycosylated (O-linked (Man) threonine). N-linked (GlcNAc...) asparagine glycosylation is found at Asn-769, Asn-786, Asn-880, and Asn-931. Residues Gly-934 to Met-956 form a helical membrane-spanning segment. Topologically, residues Lys-957–Thr-1382 are cytoplasmic. Ser-967 carries the phosphoserine modification. At Thr-978 the chain carries Phosphothreonine. Phosphoserine is present on residues Ser-991, Ser-998, and Ser-1001. Tyr-1004 is subject to Phosphotyrosine. The region spanning Val-1079–Ile-1346 is the Protein kinase domain. Residues Ile-1085–Val-1093 and Lys-1111 contribute to the ATP site. Asp-1205 serves as the catalytic Proton acceptor. Residues Leu-1213–Thr-1382 form an interaction with RANBP9 region. Tyr-1231 is subject to Phosphotyrosine. A phosphotyrosine; by autocatalysis mark is found at Tyr-1235 and Tyr-1236. A Phosphothreonine modification is found at Thr-1290. Positions Trp-1321–Val-1360 are interaction with MUC20. Residues Tyr-1350 and Tyr-1357 each carry the phosphotyrosine; by autocatalysis modification. Phosphotyrosine is present on Tyr-1366.

The protein belongs to the protein kinase superfamily. Tyr protein kinase family. In terms of assembly, heterodimer made of an alpha chain (50 kDa) and a beta chain (145 kDa) which are disulfide linked. Binds PLXNB1. Interacts when phosphorylated with downstream effectors including STAT3, PIK3R1, SRC, PCLG1, GRB2 and GAB1. Interacts with SPSB1, SPSB2 and SPSB4. Interacts with INPP5D/SHIP1. When phosphorylated at Tyr-1357, interacts with INPPL1/SHIP2. Interacts with RANBP9 and RANBP10, as well as SPSB1, SPSB2, SPSB3 and SPSB4. SPSB1 binding occurs in the presence and in the absence of HGF, however HGF treatment has a positive effect on this interaction. Interacts with MUC20; prevents interaction with GRB2 and suppresses hepatocyte growth factor-induced cell proliferation. Interacts with GRB10. Interacts with PTPN1 and PTPN2. Interacts with HSP90AA1 and HSP90AB1; the interaction suppresses MET kinase activity. Interacts with tensin TNS3. Interacts (when phosphorylated) with tensin TNS4 (via SH2 domain); the interaction increases MET protein stability by inhibiting MET endocytosis and subsequent lysosomal degradation. In terms of processing, autophosphorylated in response to ligand binding on Tyr-1235 and Tyr-1236 in the kinase domain leading to further phosphorylation of Tyr-1350 and Tyr-1357 in the C-terminal multifunctional docking site. Dephosphorylated by PTPRJ at Tyr-1350 and Tyr-1366. Dephosphorylated by PTPN1 and PTPN2. Post-translationally, ubiquitinated. Ubiquitination by CBL regulates the receptor stability and activity through proteasomal degradation. O-mannosylation of IPT/TIG domains by TMEM260 is required for protein maturation. O-mannosylated residues are composed of single mannose glycans that are not elongated or modified.

Its subcellular location is the membrane. The catalysed reaction is L-tyrosyl-[protein] + ATP = O-phospho-L-tyrosyl-[protein] + ADP + H(+). With respect to regulation, in its inactive state, the C-terminal tail interacts with the catalytic domain and inhibits the kinase activity. Upon ligand binding, the C-terminal tail is displaced and becomes phosphorylated, thus increasing the kinase activity. Receptor tyrosine kinase that transduces signals from the extracellular matrix into the cytoplasm by binding to hepatocyte growth factor/HGF ligand. Regulates many physiological processes including proliferation, scattering, morphogenesis and survival. Ligand binding at the cell surface induces autophosphorylation of MET on its intracellular domain that provides docking sites for downstream signaling molecules. Following activation by ligand, interacts with the PI3-kinase subunit PIK3R1, PLCG1, SRC, GRB2, STAT3 or the adapter GAB1. Recruitment of these downstream effectors by MET leads to the activation of several signaling cascades including the RAS-ERK, PI3 kinase-AKT, or PLCgamma-PKC. The RAS-ERK activation is associated with the morphogenetic effects while PI3K/AKT coordinates prosurvival effects. During embryonic development, MET signaling plays a role in gastrulation, development and migration of muscles and neuronal precursors, angiogenesis and kidney formation. In adults, participates in wound healing as well as organ regeneration and tissue remodeling. Also promotes differentiation and proliferation of hematopoietic cells. This is Hepatocyte growth factor receptor (MET) from Ornithorhynchus anatinus (Duckbill platypus).